A 122-amino-acid polypeptide reads, in one-letter code: Large ribosomal subunit protein uL14 (122 aa).

It belongs to the universal ribosomal protein uL14 family. In terms of assembly, part of the 50S ribosomal subunit. Forms a cluster with proteins L3 and L19. In the 70S ribosome, L14 and L19 interact and together make contacts with the 16S rRNA in bridges B5 and B8.

Binds to 23S rRNA. Forms part of two intersubunit bridges in the 70S ribosome. The polypeptide is Large ribosomal subunit protein uL14 (Rickettsia felis (strain ATCC VR-1525 / URRWXCal2) (Rickettsia azadi)).